Reading from the N-terminus, the 324-residue chain is Corticotropin-releasing factor-binding protein (324 aa).

Residues 1–23 (MAPTLKLQCHFILVCLLALRGES) form the signal peptide. 5 disulfide bridges follow: C62–C83, C106–C143, C185–C207, C239–C266, and C279–C320. N-linked (GlcNAc...) asparagine glycosylation is present at N206.

This sequence belongs to the CRF-binding protein family.

It localises to the secreted. Binds CRF and inactivates it. May prevent inappropriate pituitary-adrenal stimulation in pregnancy. This Ovis aries (Sheep) protein is Corticotropin-releasing factor-binding protein (CRHBP).